A 444-amino-acid chain; its full sequence is NADH-ubiquinone oxidoreductase chain 4 (444 aa).

13 helical membrane-spanning segments follow: residues 4-24 (YLFM…WWLV), 28-48 (IFLL…LSMI), 53-73 (GVDF…CLMI), 87-107 (NFFV…FSSL), 109-129 (LFSF…LILG), 141-161 (VYLM…LFSI), 173-193 (LIDF…AFLV), 212-232 (PISG…YGIF), 245-265 (FNYF…FVCF), 272-294 (SLIA…TMNW), 306-326 (GHGI…ELLG), 330-350 (LLIN…WFLL), and 373-393 (IISW…FSAV).

This sequence belongs to the complex I subunit 4 family.

The protein localises to the mitochondrion membrane. The catalysed reaction is a ubiquinone + NADH + 5 H(+)(in) = a ubiquinol + NAD(+) + 4 H(+)(out). In terms of biological role, core subunit of the mitochondrial membrane respiratory chain NADH dehydrogenase (Complex I) that is believed to belong to the minimal assembly required for catalysis. Complex I functions in the transfer of electrons from NADH to the respiratory chain. The immediate electron acceptor for the enzyme is believed to be ubiquinone. This chain is NADH-ubiquinone oxidoreductase chain 4 (ND4), found in Locusta migratoria (Migratory locust).